Here is a 574-residue protein sequence, read N- to C-terminus: Multidrug and toxin extrusion protein 1 (574 aa).

Residues 1-51 (MEGQAAETNHRAETVVRAELCLSAEQGPETTAYSQKRCLFLPMEVWQEAQQ) are Cytoplasmic-facing. Residues 52 to 72 (LLALAAPAFLSQLMIFLISIV) traverse the membrane as a helical segment. Topologically, residues 73–86 (SSIFCGHLGKVELD) are extracellular. A helical transmembrane segment spans residues 87 to 107 (AVSLAITIINITGVAVGTGLA). The Cytoplasmic segment spans residues 108–133 (GACDTLISQTFGGSNLKLVGIILQRG). The helical transmembrane segment at 134 to 154 (ILILLLFCFPCWALLINTESI) threads the bilayer. Over 155–168 (LLLFRQDPEVSKLT) the chain is Extracellular. The helical transmembrane segment at 169–189 (QIYVLIFLPALPAAFLYQLLA) threads the bilayer. The Cytoplasmic portion of the chain corresponds to 190 to 204 (KYLQNQGIIYPQVLT). The helical transmembrane segment at 205–225 (GFIANIFNALFNYILLYVLGL) threads the bilayer. Topologically, residues 226–230 (GVMGS) are extracellular. A helical membrane pass occupies residues 231-251 (ACANTVSQFIQMILLFLYIVW). Over 252 to 271 (RRLYADTWGGWSQACFEEWG) the chain is Cytoplasmic. Residues 272–291 (AFIRLAVASMLMLCIEWWAF) form a helical membrane-spanning segment. The Extracellular portion of the chain corresponds to 292 to 309 (EISMFLAGVLGMVDLAAQ). Residues 310 to 330 (AIIYQVAIVVYLIPLGLCIAG) form a helical membrane-spanning segment. The Cytoplasmic portion of the chain corresponds to 331–350 (SIRVGHGLGAGNTEQAKRSA). A helical membrane pass occupies residues 351–371 (LVVLCMTELCALLSGILLATL). Topologically, residues 372 to 384 (KDVVAYIFTSDPN) are extracellular. A helical transmembrane segment spans residues 385–405 (IVALVSYVLPVYSACLLFDAC). The Cytoplasmic portion of the chain corresponds to 406 to 430 (VAACGGILRGSGKLKVGAISHTVGY). Residues 431-451 (YVIGLPLGISLMFAAKLGIIG) traverse the membrane as a helical segment. The Extracellular portion of the chain corresponds to 452 to 453 (FW). A helical membrane pass occupies residues 454–472 (FGILACGIAQSIFLIIFVF). Residues 473-549 (KIDWKRASEE…AGAAQHTRTL (77 aa)) lie on the Cytoplasmic side of the membrane. Positions 500–541 (KPSVYQEGCPTEQGDVDPGNVESIEFSQSSTSSEGTSPTPAG) are disordered. Over residues 521–538 (ESIEFSQSSTSSEGTSPT) the composition is skewed to low complexity. The helical transmembrane segment at 550–570 (ILTRGLALGCAVGTLIIGIVI) threads the bilayer. The Extracellular portion of the chain corresponds to 571–574 (RLSV).

It belongs to the multi antimicrobial extrusion (MATE) (TC 2.A.66.1) family.

It localises to the cell membrane. The protein resides in the apical cell membrane. It catalyses the reaction thiamine(out) + H(+)(in) = thiamine(in) + H(+)(out). The enzyme catalyses estrone 3-sulfate(in) + H(+)(out) = estrone 3-sulfate(out) + H(+)(in). It carries out the reaction creatinine(in) + H(+)(out) = creatinine(out) + H(+)(in). The catalysed reaction is agmatine(in) + H(+)(out) = agmatine(out) + H(+)(in). Multidrug efflux pump that functions as a H(+)/organic cation antiporter. Mediates the secretion of cationic compounds including drugs, toxins and endogenous metabolites. Plays a role physiological role in the excretion of drugs, toxins and endogenous metabolites through the kidney and liver, into urine and bile respectively. The sequence is that of Multidrug and toxin extrusion protein 1 (slc47a1) from Xenopus tropicalis (Western clawed frog).